A 339-amino-acid polypeptide reads, in one-letter code: N-acetyl-gamma-glutamyl-phosphate reductase 1 (339 aa).

C149 is a catalytic residue.

It belongs to the NAGSA dehydrogenase family. Type 1 subfamily.

It localises to the cytoplasm. The enzyme catalyses N-acetyl-L-glutamate 5-semialdehyde + phosphate + NADP(+) = N-acetyl-L-glutamyl 5-phosphate + NADPH + H(+). The protein operates within amino-acid biosynthesis; L-arginine biosynthesis; N(2)-acetyl-L-ornithine from L-glutamate: step 3/4. Its function is as follows. Catalyzes the NADPH-dependent reduction of N-acetyl-5-glutamyl phosphate to yield N-acetyl-L-glutamate 5-semialdehyde. This chain is N-acetyl-gamma-glutamyl-phosphate reductase 1, found in Lactiplantibacillus plantarum (strain ATCC BAA-793 / NCIMB 8826 / WCFS1) (Lactobacillus plantarum).